The sequence spans 141 residues: Universal stress protein A homolog (141 aa).

Belongs to the universal stress protein A family. As to quaternary structure, homodimer.

The protein localises to the cytoplasm. Functionally, required for resistance to DNA-damaging agents. This chain is Universal stress protein A homolog (uspA), found in Pasteurella multocida (strain Pm70).